A 322-amino-acid chain; its full sequence is Putative integrase ORF3 (322 aa).

In terms of domain architecture, Integrase catalytic spans Arg-153–Ile-322.

The protein belongs to the plectrovirus integrase ORF3 family.

This protein may encode an integrase, which is necessary for integration of the viral DNA into host genome. The sequence is that of Putative integrase ORF3 from Spiroplasma virus SpV1-R8A2 B (SpV1).